Consider the following 347-residue polypeptide: Probable dual-specificity RNA methyltransferase RlmN (347 aa).

Glutamate 93 serves as the catalytic Proton acceptor. Residues 100–323 (KAKRKTACVS…KKAGLNISTR (224 aa)) form the Radical SAM core domain. An intrachain disulfide couples cysteine 107 to cysteine 334. Positions 114, 118, and 121 each coordinate [4Fe-4S] cluster. S-adenosyl-L-methionine-binding positions include 160–161 (GE), serine 192, 215–217 (SLT), and asparagine 291. The S-methylcysteine intermediate role is filled by cysteine 334.

The protein belongs to the radical SAM superfamily. RlmN family. Requires [4Fe-4S] cluster as cofactor.

The protein localises to the cytoplasm. It catalyses the reaction adenosine(2503) in 23S rRNA + 2 reduced [2Fe-2S]-[ferredoxin] + 2 S-adenosyl-L-methionine = 2-methyladenosine(2503) in 23S rRNA + 5'-deoxyadenosine + L-methionine + 2 oxidized [2Fe-2S]-[ferredoxin] + S-adenosyl-L-homocysteine. It carries out the reaction adenosine(37) in tRNA + 2 reduced [2Fe-2S]-[ferredoxin] + 2 S-adenosyl-L-methionine = 2-methyladenosine(37) in tRNA + 5'-deoxyadenosine + L-methionine + 2 oxidized [2Fe-2S]-[ferredoxin] + S-adenosyl-L-homocysteine. In terms of biological role, specifically methylates position 2 of adenine 2503 in 23S rRNA and position 2 of adenine 37 in tRNAs. This Treponema denticola (strain ATCC 35405 / DSM 14222 / CIP 103919 / JCM 8153 / KCTC 15104) protein is Probable dual-specificity RNA methyltransferase RlmN.